The sequence spans 420 residues: Glucose-1-phosphate adenylyltransferase (420 aa).

Residues Y107, G173, 188-189, and S206 contribute to the alpha-D-glucose 1-phosphate site; that span reads EK.

This sequence belongs to the bacterial/plant glucose-1-phosphate adenylyltransferase family. In terms of assembly, homotetramer.

It catalyses the reaction alpha-D-glucose 1-phosphate + ATP + H(+) = ADP-alpha-D-glucose + diphosphate. Its pathway is glycan biosynthesis; glycogen biosynthesis. In terms of biological role, involved in the biosynthesis of ADP-glucose, a building block required for the elongation reactions to produce glycogen. Catalyzes the reaction between ATP and alpha-D-glucose 1-phosphate (G1P) to produce pyrophosphate and ADP-Glc. This is Glucose-1-phosphate adenylyltransferase from Shewanella frigidimarina (strain NCIMB 400).